A 224-amino-acid polypeptide reads, in one-letter code: Transposase for insertion sequence element IS257 in transposon Tn4003 (224 aa).

Positions 33-52 form a DNA-binding region, H-T-H motif; the sequence is EILRGRGVNVHHSTVYRWVQ. One can recognise an Integrase catalytic domain in the interval 73 to 222; sequence WRIDETYIKI…SPCHEISIML (150 aa).

Its function is as follows. Involved in the transposition of the insertion sequence. The protein is Transposase for insertion sequence element IS257 in transposon Tn4003 of Staphylococcus aureus.